Consider the following 553-residue polypeptide: Chaperonin GroEL (553 aa).

Residues threonine 30–proline 33, lysine 51, aspartate 87–threonine 91, glycine 416, and aspartate 496 each bind ATP.

This sequence belongs to the chaperonin (HSP60) family. As to quaternary structure, forms a cylinder of 14 subunits composed of two heptameric rings stacked back-to-back. Interacts with the co-chaperonin GroES.

It localises to the cytoplasm. The enzyme catalyses ATP + H2O + a folded polypeptide = ADP + phosphate + an unfolded polypeptide.. Functionally, together with its co-chaperonin GroES, plays an essential role in assisting protein folding. The GroEL-GroES system forms a nano-cage that allows encapsulation of the non-native substrate proteins and provides a physical environment optimized to promote and accelerate protein folding. The chain is Chaperonin GroEL from Alkalilimnicola ehrlichii (strain ATCC BAA-1101 / DSM 17681 / MLHE-1).